A 317-amino-acid polypeptide reads, in one-letter code: Peptidyl-prolyl cis-trans isomerase CYP26-2, chloroplastic (317 aa).

The tract at residues 1 to 37 (MMQPNAKLLSPSAKFLPSPIEPPQHNRRTTVGAPPSL) is disordered. The PPIase cyclophilin-type domain maps to 95–311 (FIDVSIDGEP…SKVVVTNCGL (217 aa)).

It belongs to the cyclophilin-type PPIase family. In terms of tissue distribution, ubiquitous. Lower levels of expression in roots.

It localises to the plastid. The protein localises to the chloroplast thylakoid. It catalyses the reaction [protein]-peptidylproline (omega=180) = [protein]-peptidylproline (omega=0). Functionally, PPIases accelerate the folding of proteins. It catalyzes the cis-trans isomerization of proline imidic peptide bonds in oligopeptides. In Arabidopsis thaliana (Mouse-ear cress), this protein is Peptidyl-prolyl cis-trans isomerase CYP26-2, chloroplastic (CYP26-2).